A 537-amino-acid chain; its full sequence is Putative cysteine ligase BshC (537 aa).

Residues 383–451 are a coiled coil; sequence MERTQKLLKQ…EVKENQDNFN (69 aa).

Belongs to the BshC family.

Its function is as follows. Involved in bacillithiol (BSH) biosynthesis. May catalyze the last step of the pathway, the addition of cysteine to glucosamine malate (GlcN-Mal) to generate BSH. This chain is Putative cysteine ligase BshC, found in Staphylococcus haemolyticus (strain JCSC1435).